We begin with the raw amino-acid sequence, 109 residues long: Nucleoid-associated protein APL_0075 (109 aa).

Positions 1 to 21 (MFGKGGLGGLMKQAQQMQERM) are disordered. The span at 10-19 (LMKQAQQMQE) shows a compositional bias: low complexity.

Belongs to the YbaB/EbfC family. Homodimer.

The protein resides in the cytoplasm. It is found in the nucleoid. Its function is as follows. Binds to DNA and alters its conformation. May be involved in regulation of gene expression, nucleoid organization and DNA protection. This Actinobacillus pleuropneumoniae serotype 5b (strain L20) protein is Nucleoid-associated protein APL_0075.